The primary structure comprises 442 residues: tRNA-2-methylthio-N(6)-dimethylallyladenosine synthase (442 aa).

Positions 3–120 constitute an MTTase N-terminal domain; it reads KKLYIETHGC…LPEMIDAARV (118 aa). Positions 12, 49, 83, 157, 161, and 164 each coordinate [4Fe-4S] cluster. The region spanning 143 to 375 is the Radical SAM core domain; the sequence is RVDGPSAYVS…QHRLNQQGFE (233 aa). The region spanning 378–442 is the TRAM domain; the sequence is RQMVGSIQRI…PHSLRGSLLQ (65 aa).

The protein belongs to the methylthiotransferase family. MiaB subfamily. In terms of assembly, monomer. Requires [4Fe-4S] cluster as cofactor.

The protein localises to the cytoplasm. The enzyme catalyses N(6)-dimethylallyladenosine(37) in tRNA + (sulfur carrier)-SH + AH2 + 2 S-adenosyl-L-methionine = 2-methylsulfanyl-N(6)-dimethylallyladenosine(37) in tRNA + (sulfur carrier)-H + 5'-deoxyadenosine + L-methionine + A + S-adenosyl-L-homocysteine + 2 H(+). Catalyzes the methylthiolation of N6-(dimethylallyl)adenosine (i(6)A), leading to the formation of 2-methylthio-N6-(dimethylallyl)adenosine (ms(2)i(6)A) at position 37 in tRNAs that read codons beginning with uridine. This is tRNA-2-methylthio-N(6)-dimethylallyladenosine synthase from Pseudomonas syringae pv. syringae (strain B728a).